We begin with the raw amino-acid sequence, 228 residues long: Ribonuclease 3 (228 aa).

The region spanning 5-127 is the RNase III domain; the sequence is KDALQDRLGY…LFGAIYLDGG (123 aa). Residue Glu40 participates in Mg(2+) binding. Residue Asp44 is part of the active site. 2 residues coordinate Mg(2+): Asp113 and Glu116. Residue Glu116 is part of the active site. In terms of domain architecture, DRBM spans 154-224; that stretch reads DPKTRLQEHL…AEQMLKRLED (71 aa). The disordered stretch occupies residues 200-228; that stretch reads AEGEAGSRRKAEQQAAEQMLKRLEDKHER. Basic and acidic residues predominate over residues 218–228; sequence MLKRLEDKHER.

It belongs to the ribonuclease III family. As to quaternary structure, homodimer. Requires Mg(2+) as cofactor.

The protein resides in the cytoplasm. It carries out the reaction Endonucleolytic cleavage to 5'-phosphomonoester.. Digests double-stranded RNA. Involved in the processing of primary rRNA transcript to yield the immediate precursors to the large and small rRNAs (23S and 16S). Processes some mRNAs, and tRNAs when they are encoded in the rRNA operon. Processes pre-crRNA and tracrRNA of type II CRISPR loci if present in the organism. The polypeptide is Ribonuclease 3 (Alkalilimnicola ehrlichii (strain ATCC BAA-1101 / DSM 17681 / MLHE-1)).